Consider the following 423-residue polypeptide: 3-phosphoshikimate 1-carboxyvinyltransferase (423 aa).

3-phosphoshikimate-binding residues include lysine 21, serine 22, and arginine 26. Lysine 21 provides a ligand contact to phosphoenolpyruvate. Phosphoenolpyruvate contacts are provided by glycine 92 and arginine 120. 3-phosphoshikimate-binding residues include serine 164, glutamine 166, aspartate 312, and lysine 339. Glutamine 166 lines the phosphoenolpyruvate pocket. Aspartate 312 (proton acceptor) is an active-site residue. Positions 343 and 385 each coordinate phosphoenolpyruvate.

Belongs to the EPSP synthase family. In terms of assembly, monomer.

It is found in the cytoplasm. The enzyme catalyses 3-phosphoshikimate + phosphoenolpyruvate = 5-O-(1-carboxyvinyl)-3-phosphoshikimate + phosphate. It functions in the pathway metabolic intermediate biosynthesis; chorismate biosynthesis; chorismate from D-erythrose 4-phosphate and phosphoenolpyruvate: step 6/7. Functionally, catalyzes the transfer of the enolpyruvyl moiety of phosphoenolpyruvate (PEP) to the 5-hydroxyl of shikimate-3-phosphate (S3P) to produce enolpyruvyl shikimate-3-phosphate and inorganic phosphate. This Thermoanaerobacter pseudethanolicus (strain ATCC 33223 / 39E) (Clostridium thermohydrosulfuricum) protein is 3-phosphoshikimate 1-carboxyvinyltransferase.